A 321-amino-acid chain; its full sequence is Trem-like transcript 2 protein (321 aa).

Residues Met-1 to Ser-18 form the signal peptide. Topologically, residues Gly-19–Ser-268 are extracellular. Residues Pro-20 to Leu-121 form the Ig-like V-type domain. Cystine bridges form between Cys-41/Cys-105 and Cys-56/Cys-63. Asn-89 carries N-linked (GlcNAc...) asparagine glycosylation. 2 stretches are compositionally biased toward polar residues: residues Gly-189 to Asp-220 and Ser-227 to Thr-241. Residues Gly-189–Thr-241 form a disordered region. A helical transmembrane segment spans residues Thr-269–Trp-289. The Cytoplasmic portion of the chain corresponds to Lys-290 to Ile-321.

In terms of assembly, interacts with CD276 and this interaction enhances T-cell activation. Detected in cultured B-cells, T-cell leukemia and monocyte leukemia. Expressed constitutively on CD8 T-cells and induced on CD4 T-cells after activation.

The protein localises to the cell membrane. In terms of biological role, cell surface receptor that may play a role in the innate and adaptive immune response. Acts as a counter-receptor for CD276 and interaction with CD276 on T-cells enhances T-cell activation. This is Trem-like transcript 2 protein (TREML2) from Homo sapiens (Human).